Consider the following 319-residue polypeptide: ATP-dependent 6-phosphofructokinase (319 aa).

Gly11 lines the ATP pocket. Residue 21-25 (RAVVR) participates in ADP binding. Residues 72–73 (RC) and 102–105 (GDGS) each bind ATP. Asp103 contributes to the Mg(2+) binding site. 125–127 (TID) contributes to the substrate binding site. Asp127 functions as the Proton acceptor in the catalytic mechanism. Arg154 serves as a coordination point for ADP. Substrate is bound by residues Arg162 and 169–171 (MGR). Residues 185 to 187 (GAE), Arg211, and 213 to 215 (KRH) each bind ADP. Residues Glu222, Arg243, and 249 to 252 (HVQR) each bind substrate.

It belongs to the phosphofructokinase type A (PFKA) family. ATP-dependent PFK group I subfamily. Prokaryotic clade 'B1' sub-subfamily. In terms of assembly, homotetramer. Mg(2+) is required as a cofactor.

It localises to the cytoplasm. It carries out the reaction beta-D-fructose 6-phosphate + ATP = beta-D-fructose 1,6-bisphosphate + ADP + H(+). Its pathway is carbohydrate degradation; glycolysis; D-glyceraldehyde 3-phosphate and glycerone phosphate from D-glucose: step 3/4. Allosterically activated by ADP and other diphosphonucleosides, and allosterically inhibited by phosphoenolpyruvate. Its function is as follows. Catalyzes the phosphorylation of D-fructose 6-phosphate to fructose 1,6-bisphosphate by ATP, the first committing step of glycolysis. This Clostridioides difficile (strain 630) (Peptoclostridium difficile) protein is ATP-dependent 6-phosphofructokinase.